We begin with the raw amino-acid sequence, 266 residues long: Glucosamine-6-phosphate deaminase (266 aa).

Asp72 acts as the Proton acceptor; for enolization step in catalysis. The For ring-opening step role is filled by Asp141. Residue His143 is the Proton acceptor; for ring-opening step of the active site. Glu148 functions as the For ring-opening step in the catalytic mechanism.

This sequence belongs to the glucosamine/galactosamine-6-phosphate isomerase family. NagB subfamily. As to quaternary structure, homohexamer.

The catalysed reaction is alpha-D-glucosamine 6-phosphate + H2O = beta-D-fructose 6-phosphate + NH4(+). Its pathway is amino-sugar metabolism; N-acetylneuraminate degradation; D-fructose 6-phosphate from N-acetylneuraminate: step 5/5. Allosterically activated by N-acetylglucosamine 6-phosphate (GlcNAc6P). In terms of biological role, catalyzes the reversible isomerization-deamination of glucosamine 6-phosphate (GlcN6P) to form fructose 6-phosphate (Fru6P) and ammonium ion. In Klebsiella pneumoniae (strain 342), this protein is Glucosamine-6-phosphate deaminase.